Reading from the N-terminus, the 156-residue chain is Small ribosomal subunit protein uS7 (156 aa).

This sequence belongs to the universal ribosomal protein uS7 family. In terms of assembly, part of the 30S ribosomal subunit. Contacts proteins S9 and S11.

Functionally, one of the primary rRNA binding proteins, it binds directly to 16S rRNA where it nucleates assembly of the head domain of the 30S subunit. Is located at the subunit interface close to the decoding center, probably blocks exit of the E-site tRNA. The protein is Small ribosomal subunit protein uS7 of Baumannia cicadellinicola subsp. Homalodisca coagulata.